A 351-amino-acid polypeptide reads, in one-letter code: uncharacterized protein (351 aa).

Belongs to the bacterial luciferase oxidoreductase family.

This is an uncharacterized protein from Sinorhizobium fredii (strain NBRC 101917 / NGR234).